A 231-amino-acid chain; its full sequence is Elongation factor 1-delta 2 (231 aa).

At alanine 2 the chain carries N-acetylalanine. The GST C-terminal domain occupies 11–73 (SGLKKLDEHL…LRISGVSAEG (63 aa)). Positions 82-136 (SPITEEAVATPPAADSKDTAAEEEDDDDVDLFGEETEEEKKAAEERAASVKASTK) are disordered. Over residues 102-118 (AEEEDDDDVDLFGEETE) the composition is skewed to acidic residues. The span at 119-129 (EEKKAAEERAA) shows a compositional bias: basic and acidic residues.

The protein belongs to the EF-1-beta/EF-1-delta family. As to quaternary structure, EF-1 is composed of 4 subunits: alpha, beta (1B-alpha=beta'), delta (1B-beta), and gamma (1B-gamma).

In terms of biological role, EF-1-beta and EF-1-delta stimulate the exchange of GDP bound to EF-1-alpha to GTP. The polypeptide is Elongation factor 1-delta 2 (Arabidopsis thaliana (Mouse-ear cress)).